The sequence spans 112 residues: Prothymosin alpha-B (112 aa).

The tract at residues 1–112 is disordered; it reads MSDTAVDASV…TKKQKTDEDD (112 aa). Residues 9–35 show a composition bias toward basic and acidic residues; it reads SVEKSTKDLKAKEKEVVEEAENGKDKP. 2 stretches are compositionally biased toward acidic residues: residues 41–83 and 92–101; these read ENEE…DEVE and EDDEDDDDDV. A compositionally biased stretch (basic and acidic residues) spans 102-112; the sequence is ETKKQKTDEDD.

It belongs to the pro/parathymosin family.

It localises to the nucleus. The sequence is that of Prothymosin alpha-B (ptma-b) from Xenopus laevis (African clawed frog).